A 227-amino-acid polypeptide reads, in one-letter code: Ribonuclease 3 (227 aa).

The RNase III domain maps to 4 to 133 (FEKLETLLGY…LIAAIYLDSN (130 aa)). Glu-46 lines the Mg(2+) pocket. The active site involves Asp-50. Residues Asn-119 and Glu-122 each contribute to the Mg(2+) site. Glu-122 is an active-site residue. The 69-residue stretch at 158 to 226 (DPKTALQEWA…ARCLLHRLKN (69 aa)) folds into the DRBM domain.

The protein belongs to the ribonuclease III family. Homodimer. The cofactor is Mg(2+).

The protein localises to the cytoplasm. It catalyses the reaction Endonucleolytic cleavage to 5'-phosphomonoester.. Its function is as follows. Digests double-stranded RNA. Involved in the processing of primary rRNA transcript to yield the immediate precursors to the large and small rRNAs (23S and 16S). Processes some mRNAs, and tRNAs when they are encoded in the rRNA operon. Processes pre-crRNA and tracrRNA of type II CRISPR loci if present in the organism. This chain is Ribonuclease 3, found in Rickettsia typhi (strain ATCC VR-144 / Wilmington).